The sequence spans 101 residues: Large ribosomal subunit protein uL24 (101 aa).

This sequence belongs to the universal ribosomal protein uL24 family. As to quaternary structure, part of the 50S ribosomal subunit.

In terms of biological role, one of two assembly initiator proteins, it binds directly to the 5'-end of the 23S rRNA, where it nucleates assembly of the 50S subunit. One of the proteins that surrounds the polypeptide exit tunnel on the outside of the subunit. The sequence is that of Large ribosomal subunit protein uL24 from Streptococcus agalactiae serotype III (strain NEM316).